The sequence spans 618 residues: 1-deoxy-D-xylulose-5-phosphate synthase (618 aa).

Thiamine diphosphate contacts are provided by residues His76 and 117 to 119 (GHS). Position 148 (Asp148) interacts with Mg(2+). Thiamine diphosphate is bound by residues 149–150 (GA), Asn177, Tyr284, and Glu366. Residue Asn177 participates in Mg(2+) binding.

Belongs to the transketolase family. DXPS subfamily. Homodimer. It depends on Mg(2+) as a cofactor. The cofactor is thiamine diphosphate.

It carries out the reaction D-glyceraldehyde 3-phosphate + pyruvate + H(+) = 1-deoxy-D-xylulose 5-phosphate + CO2. It participates in metabolic intermediate biosynthesis; 1-deoxy-D-xylulose 5-phosphate biosynthesis; 1-deoxy-D-xylulose 5-phosphate from D-glyceraldehyde 3-phosphate and pyruvate: step 1/1. Its function is as follows. Catalyzes the acyloin condensation reaction between C atoms 2 and 3 of pyruvate and glyceraldehyde 3-phosphate to yield 1-deoxy-D-xylulose-5-phosphate (DXP). This Dechloromonas aromatica (strain RCB) protein is 1-deoxy-D-xylulose-5-phosphate synthase.